The primary structure comprises 101 residues: Protein Tat (101 aa).

The interaction with human CREBBP stretch occupies residues 1–24 (MEPIDPNLEPWNHPGSQPKTACNN). The transactivation stretch occupies residues 1-48 (MEPIDPNLEPWNHPGSQPKTACNNCYCKQCCYHCQLCFTKKGLGISYG). Cys22, Cys25, and Cys27 together coordinate Zn(2+). The segment at 22 to 37 (CNNCYCKQCCYHCQLC) is cysteine-rich. Lys28 is subject to N6-acetyllysine; by host PCAF. Residues Cys30, His33, Cys34, and Cys37 each coordinate Zn(2+). Residues 38–48 (FTKKGLGISYG) are core. The segment at 48–101 (GRRKRKQRRRTSESSQNHQDPVPKQPLSQPGGIETGQKKSKKEVESQTTSDQFA) is disordered. A Nuclear localization signal, RNA-binding (TAR), and protein transduction motif is present at residues 49 to 57 (RRKRKQRRR). The interaction with the host capping enzyme RNGTT stretch occupies residues 49-86 (RRKRKQRRRTSESSQNHQDPVPKQPLSQPGGIETGQKK). An N6-acetyllysine; by host EP300 and GCN5L2 modification is found at Lys51. Asymmetric dimethylarginine; by host PRMT6 is present on Arg52. Lys71 is covalently cross-linked (Glycyl lysine isopeptide (Lys-Gly) (interchain with G-Cter in ubiquitin)).

It belongs to the lentiviruses Tat family. In terms of assembly, interacts with host CCNT1. Associates with the P-TEFb complex composed at least of Tat, P-TEFb (CDK9 and CCNT1), TAR RNA, RNA Pol II. Recruits the HATs CREBBP, TAF1/TFIID, EP300, PCAF and GCN5L2. Interacts with host KAT5/Tip60; this interaction targets the latter to degradation. Interacts with the host deacetylase SIRT1. Interacts with host capping enzyme RNGTT; this interaction stimulates RNGTT. Binds to host KDR, and to the host integrins ITGAV/ITGB3 and ITGA5/ITGB1. Interacts with host KPNB1/importin beta-1 without previous binding to KPNA1/importin alpha-1. Interacts with EIF2AK2. Interacts with host nucleosome assembly protein NAP1L1; this interaction may be required for the transport of Tat within the nucleus, since the two proteins interact at the nuclear rim. Interacts with host C1QBP/SF2P32; this interaction involves lysine-acetylated Tat. Interacts with the host chemokine receptors CCR2, CCR3 and CXCR4. Interacts with host DPP4/CD26; this interaction may trigger an anti-proliferative effect. Interacts with host LDLR. Interacts with the host extracellular matrix metalloproteinase MMP1. Interacts with host PRMT6; this interaction mediates Tat's methylation. Interacts with, and is ubiquitinated by MDM2/Hdm2. Interacts with host PSMC3 and HTATIP2. Interacts with STAB1; this interaction may overcome SATB1-mediated repression of IL2 and IL2RA (interleukin) in T cells by binding to the same domain than HDAC1. Interacts (when acetylated) with human CDK13, thereby increasing HIV-1 mRNA splicing and promoting the production of the doubly spliced HIV-1 protein Nef. Interacts with host TBP; this interaction modulates the activity of transcriptional pre-initiation complex. Interacts with host RELA. Asymmetrical arginine methylation by host PRMT6 seems to diminish the transactivation capacity of Tat and affects the interaction with host CCNT1. In terms of processing, polyubiquitination by host MDM2 does not target Tat to degradation, but activates its transactivation function and fosters interaction with CCNT1 and TAR RNA. Post-translationally, phosphorylated by EIF2AK2 on serine and threonine residues adjacent to the basic region important for TAR RNA binding and function. Phosphorylation of Tat by EIF2AK2 is dependent on the prior activation of EIF2AK2 by dsRNA.

Its subcellular location is the host nucleus. It localises to the host nucleolus. The protein localises to the host cytoplasm. The protein resides in the secreted. Transcriptional activator that increases RNA Pol II processivity, thereby increasing the level of full-length viral transcripts. Recognizes a hairpin structure at the 5'-LTR of the nascent viral mRNAs referred to as the transactivation responsive RNA element (TAR) and recruits the cyclin T1-CDK9 complex (P-TEFb complex) that will in turn hyperphosphorylate the RNA polymerase II to allow efficient elongation. The CDK9 component of P-TEFb and other Tat-activated kinases hyperphosphorylate the C-terminus of RNA Pol II that becomes stabilized and much more processive. Other factors such as HTATSF1/Tat-SF1, SUPT5H/SPT5, and HTATIP2 are also important for Tat's function. Besides its effect on RNA Pol II processivity, Tat induces chromatin remodeling of proviral genes by recruiting the histone acetyltransferases (HATs) CREBBP, EP300 and PCAF to the chromatin. This also contributes to the increase in proviral transcription rate, especially when the provirus integrates in transcriptionally silent region of the host genome. To ensure maximal activation of the LTR, Tat mediates nuclear translocation of NF-kappa-B by interacting with host RELA. Through its interaction with host TBP, Tat may also modulate transcription initiation. Tat can reactivate a latently infected cell by penetrating in it and transactivating its LTR promoter. In the cytoplasm, Tat is thought to act as a translational activator of HIV-1 mRNAs. Functionally, extracellular circulating Tat can be endocytosed by surrounding uninfected cells via the binding to several surface receptors such as CD26, CXCR4, heparan sulfate proteoglycans (HSPG) or LDLR. Neurons are rarely infected, but they internalize Tat via their LDLR. Through its interaction with nuclear HATs, Tat is potentially able to control the acetylation-dependent cellular gene expression. Modulates the expression of many cellular genes involved in cell survival, proliferation or in coding for cytokines or cytokine receptors. Tat plays a role in T-cell and neurons apoptosis. Tat induced neurotoxicity and apoptosis probably contribute to neuroAIDS. Circulating Tat also acts as a chemokine-like and/or growth factor-like molecule that binds to specific receptors on the surface of the cells, affecting many cellular pathways. In the vascular system, Tat binds to ITGAV/ITGB3 and ITGA5/ITGB1 integrins dimers at the surface of endothelial cells and competes with bFGF for heparin-binding sites, leading to an excess of soluble bFGF. This chain is Protein Tat, found in Pan troglodytes (Chimpanzee).